Reading from the N-terminus, the 402-residue chain is Dynactin subunit 2 (402 aa).

Positions 1 to 26 (MADPKYADLPGIARNEPDVYETSDLP) are disordered. Coiled coils occupy residues 101–132 (PQQRYQRLQHEVQELIRDVEQIQSAVKESAAE) and 357–402 (VHLD…KRLQ).

It belongs to the dynactin subunit 2 family. In terms of assembly, subunit of dynactin, a multiprotein complex part of a tripartite complex with dynein and a adapter, such as BICDL1, BICD2 or HOOK3. The dynactin complex is built around ACTR1A/ACTB filament and consists of an actin-related filament composed of a shoulder domain, a pointed end and a barbed end. Its length is defined by its flexible shoulder domain. The soulder is composed of 2 DCTN1 subunits, 4 DCTN2 and 2 DCTN3.

The protein localises to the cytoplasm. Its subcellular location is the cytoskeleton. It is found in the microtubule organizing center. The protein resides in the centrosome. It localises to the membrane. In terms of biological role, part of the dynactin complex that activates the molecular motor dynein for ultra-processive transport along microtubules. In the dynactin soulder domain, binds the ACTR1A filament and acts as a molecular ruler to determine the length. Modulates cytoplasmic dynein binding to an organelle, and plays a role in prometaphase chromosome alignment and spindle organization during mitosis. Involved in anchoring microtubules to centrosomes. This is Dynactin subunit 2 (DCTN2) from Gallus gallus (Chicken).